Consider the following 323-residue polypeptide: 3-dehydroquinate synthase (323 aa).

Belongs to the archaeal-type DHQ synthase family.

It carries out the reaction 2-amino-2,3,7-trideoxy-D-lyxo-hept-6-ulosonate + NAD(+) + H2O = 3-dehydroquinate + NH4(+) + NADH + H(+). Functionally, catalyzes the oxidative deamination and cyclization of 2-amino-3,7-dideoxy-D-threo-hept-6-ulosonic acid (ADH) to yield 3-dehydroquinate (DHQ), which is fed into the canonical shikimic pathway of aromatic amino acid biosynthesis. This is 3-dehydroquinate synthase from Archaeoglobus fulgidus (strain ATCC 49558 / DSM 4304 / JCM 9628 / NBRC 100126 / VC-16).